A 603-amino-acid chain; its full sequence is Elongation factor 4 (603 aa).

Residues asparagine 2–arginine 184 form the tr-type G domain. Residues aspartate 14 to threonine 19 and asparagine 131 to aspartate 134 contribute to the GTP site.

It belongs to the TRAFAC class translation factor GTPase superfamily. Classic translation factor GTPase family. LepA subfamily.

The protein resides in the cell inner membrane. It catalyses the reaction GTP + H2O = GDP + phosphate + H(+). Functionally, required for accurate and efficient protein synthesis under certain stress conditions. May act as a fidelity factor of the translation reaction, by catalyzing a one-codon backward translocation of tRNAs on improperly translocated ribosomes. Back-translocation proceeds from a post-translocation (POST) complex to a pre-translocation (PRE) complex, thus giving elongation factor G a second chance to translocate the tRNAs correctly. Binds to ribosomes in a GTP-dependent manner. This Albidiferax ferrireducens (strain ATCC BAA-621 / DSM 15236 / T118) (Rhodoferax ferrireducens) protein is Elongation factor 4.